Consider the following 205-residue polypeptide: Superoxide dismutase [Mn] (205 aa).

Positions 30, 78, 166, and 170 each coordinate Mn(2+).

Belongs to the iron/manganese superoxide dismutase family. As to quaternary structure, homodimer. Requires Mn(2+) as cofactor.

The catalysed reaction is 2 superoxide + 2 H(+) = H2O2 + O2. Functionally, destroys superoxide anion radicals which are normally produced within the cells and which are toxic to biological systems. The polypeptide is Superoxide dismutase [Mn] (sodA) (Chlamydia muridarum (strain MoPn / Nigg)).